The following is a 203-amino-acid chain: Translation initiation factor IF-3 (203 aa).

It belongs to the IF-3 family. Monomer.

It is found in the cytoplasm. Functionally, IF-3 binds to the 30S ribosomal subunit and shifts the equilibrium between 70S ribosomes and their 50S and 30S subunits in favor of the free subunits, thus enhancing the availability of 30S subunits on which protein synthesis initiation begins. This chain is Translation initiation factor IF-3, found in Corynebacterium efficiens (strain DSM 44549 / YS-314 / AJ 12310 / JCM 11189 / NBRC 100395).